A 281-amino-acid chain; its full sequence is Nhr-229 coiled coil domain containing nccd-1 (281 aa).

The sequence is that of Nhr-229 coiled coil domain containing nccd-1 from Caenorhabditis elegans.